Consider the following 692-residue polypeptide: MSKTRVYELAKELNLSSKDLISKLNDLDIKVKNHMSTLEDEEVELIMDLLRDKPQQTEEVHQKEEEDIFEDNLEDIEEERVYKKSFKKGSKKNKKNNKKAVLTEEKEEDEIKIITIPEFLTVKELAEKMKVNPTEIIKKLIAKGIMVTVNQQIDFENAAKIAEEYGFLVDKEEVKDELEMLLEETPDDEKDLQPRPPIVTVMGHVDHGKTSLLDAIRNTNVTMKEMGGITQHIGASVVEINDKKIVFLDTPGHEAFTAMRARGASITDIVVLVVAADDGVMPQTVEAINHVKAANVPMIVAINKIDLPTANPDRVKTELSELGLVPEEWGGNTICVPVSAKKNIGIDNLLEMILLVAEMEDLKANPNKPARGTIIEAKLEKGKGPVATVIVQNGTLQIGDAILAGTVYGKVRAMLDDKGRRIKKAGPSMPVEVLGFSEVPEAGDKLIVVEDEKKARELAERRKELQKEMELKRKQKVSLEDLFSQIQEGSVKELNIIIKADVQGSVEALKKSIEDLSNEEVRIKVIHGAVGAITETDVMLASASNAIIIGFNVRPETNAKNLAEKEKVDIKLYRIIYEAIEDIKAAMKGLLEPKYKEVELGRAEVRAVFRVPGVGNVAGCYVLSGKILRNSDIRVVRDGIVVYEGKIASLKRFKDDVREVQQGFECGIGIDRFNDIKEGDIIEAYQMEEIPR.

Residues 194-363 (PRPPIVTVMG…LLVAEMEDLK (170 aa)) form the tr-type G domain. Residues 203–210 (GHVDHGKT) are G1. Residue 203–210 (GHVDHGKT) participates in GTP binding. The segment at 228 to 232 (GITQH) is G2. The tract at residues 249–252 (DTPG) is G3. GTP contacts are provided by residues 249–253 (DTPGH) and 303–306 (NKID). The interval 303 to 306 (NKID) is G4. Residues 339-341 (SAK) are G5.

Belongs to the TRAFAC class translation factor GTPase superfamily. Classic translation factor GTPase family. IF-2 subfamily.

The protein localises to the cytoplasm. Functionally, one of the essential components for the initiation of protein synthesis. Protects formylmethionyl-tRNA from spontaneous hydrolysis and promotes its binding to the 30S ribosomal subunits. Also involved in the hydrolysis of GTP during the formation of the 70S ribosomal complex. The protein is Translation initiation factor IF-2 of Thermoanaerobacter sp. (strain X514).